Consider the following 960-residue polypeptide: Ran GTPase-activating protein 2 (960 aa).

5 LRR repeats span residues H69 to E92, G132 to F156, L162 to A185, L227 to M254, and R313 to S340. Residues N370–T408 form a disordered region. Residues E380–A401 show a composition bias toward acidic residues. 4 LRR repeats span residues A475–K498, G538–D561, S568–C595, and N663–A685. The interval P777–D819 is disordered. Composition is skewed to acidic residues over residues G783–E798 and S806–D819.

The protein resides in the nucleus. In terms of biological role, GTPase system comprising ran-1, ran-2 and ran-3 is essential in nucleocytoplasmic trafficking. Ran-2 is a GTPase activator for the nuclear RAS-related regulatory protein Ran, converting it to the putatively inactive GDP-bound state. Required for correct chromosome alignment and segregation on the metaphase plate. This Caenorhabditis elegans protein is Ran GTPase-activating protein 2 (ran-2).